The primary structure comprises 336 residues: Phosphate acyltransferase (336 aa).

It belongs to the PlsX family. Homodimer. Probably interacts with PlsY.

It is found in the cytoplasm. The enzyme catalyses a fatty acyl-[ACP] + phosphate = an acyl phosphate + holo-[ACP]. The protein operates within lipid metabolism; phospholipid metabolism. In terms of biological role, catalyzes the reversible formation of acyl-phosphate (acyl-PO(4)) from acyl-[acyl-carrier-protein] (acyl-ACP). This enzyme utilizes acyl-ACP as fatty acyl donor, but not acyl-CoA. The chain is Phosphate acyltransferase from Ectopseudomonas mendocina (strain ymp) (Pseudomonas mendocina).